The chain runs to 116 residues: Iron-sulfur cluster insertion protein ErpA (116 aa).

C44, C108, and C110 together coordinate iron-sulfur cluster.

Belongs to the HesB/IscA family. As to quaternary structure, homodimer. The cofactor is iron-sulfur cluster.

Its function is as follows. Required for insertion of 4Fe-4S clusters for at least IspG. The chain is Iron-sulfur cluster insertion protein ErpA from Pseudomonas aeruginosa (strain LESB58).